The following is a 620-amino-acid chain: Threonine--tRNA ligase (620 aa).

Residues 1-141 (MKMLLIHSDY…LSRKIVAKEE (141 aa)) form an editing domain region. The interval 197–496 (PHVKFIKEKD…AEKGNAPMLP (300 aa)) is catalytic. Residues C289, H341, and H465 each coordinate Zn(2+).

This sequence belongs to the class-II aminoacyl-tRNA synthetase family. In terms of assembly, homodimer. Zn(2+) is required as a cofactor.

The protein resides in the cytoplasm. The enzyme catalyses tRNA(Thr) + L-threonine + ATP = L-threonyl-tRNA(Thr) + AMP + diphosphate + H(+). Its activity is regulated as follows. Not inhibited by 1 uM borrelidin (BN); probably does not bind BN. Its function is as follows. Catalyzes the attachment of threonine to tRNA(Thr) in a two-step reaction: L-threonine is first activated by ATP to form Thr-AMP and then transferred to the acceptor end of tRNA(Thr). Also activates L-serine, but does not detectably transfer it to tRNA(Thr). Edits incorrectly charged L-seryl-tRNA(Thr) via its editing domain. Has no activity on correctly acylated L-seryl-tRNA(Ser) or L-threonyl-tRNA(Thr). Deacylates correctly charged glycyl-tRNA(Gly), but not glycyl-tRNA(Gly)(2'-dA76) (the terminal 2'-OH of tRNA adenine 76 has been dehydroxylated) nor the 2'-fluoro tRNA derivative, strongly suggesting the editing function is tRNA catalyzed. This Methanocaldococcus jannaschii (strain ATCC 43067 / DSM 2661 / JAL-1 / JCM 10045 / NBRC 100440) (Methanococcus jannaschii) protein is Threonine--tRNA ligase.